The chain runs to 447 residues: Multidrug efflux pump SdrM (447 aa).

A run of 14 helical transmembrane segments spans residues 6 to 26, 42 to 62, 70 to 90, 94 to 114, 134 to 154, 161 to 181, 194 to 214, 217 to 237, 260 to 280, 286 to 306, 323 to 342, 346 to 363, 392 to 412, and 418 to 438; these read IITV…SSII, LISL…PIVG, IIYV…MCGL, FTML…LMSL, IVGS…GGIL, WLFY…IWTF, FDTK…FALL, QLLL…MCLF, VFIT…YIPV, LGLS…AWIT, IYLL…SFGI, VLIA…GYIY, LGAS…SGIF, and NVLS…VVFF.

The protein belongs to the major facilitator superfamily.

It localises to the cell membrane. Functionally, energy-dependent drug efflux pump that increases resistance to antimicrobial agents such as norfloxacin, acriflavine and ethidium bromide. The protein is Multidrug efflux pump SdrM of Staphylococcus aureus (strain N315).